The primary structure comprises 1391 residues: Nuclear pore complex protein Nup155 (1391 aa).

Residue serine 526 is glycosylated (O-linked (GlcNAc) serine). 2 disordered regions span residues 604-630 (SSSP…AQPP) and 985-1012 (QSKA…NMLS). Serine 1057 bears the Phosphoserine mark.

This sequence belongs to the non-repetitive/WGA-negative nucleoporin family. In terms of assembly, interacts with GLE1 and NUP35/NUP53. Able to form a heterotrimer with GLE1 and NUP42 in vitro. Forms a complex with NUP35, NUP93, NUP205 and lamin B. In terms of processing, phosphorylated. Phosphorylation and dephosphorylation may be important for the function of NUP155 and may play a role in the reversible disassembly of the nuclear pore complex during mitosis. Post-translationally, disulfide-linked to NUP62. The inner channel of the NPC has a different redox environment from the cytoplasm and allows the formation of interchain disulfide bonds between some nucleoporins, the significant increase of these linkages upon oxidative stress reduces the permeability of the NPC.

The protein localises to the nucleus. The protein resides in the nuclear pore complex. It localises to the nucleus membrane. Functionally, essential component of nuclear pore complex. Could be essessential for embryogenesis. Nucleoporins may be involved both in binding and translocating proteins during nucleocytoplasmic transport. The chain is Nuclear pore complex protein Nup155 (Nup155) from Mus musculus (Mouse).